Reading from the N-terminus, the 179-residue chain is Large ribosomal subunit protein uL5 (179 aa).

This sequence belongs to the universal ribosomal protein uL5 family. As to quaternary structure, part of the 50S ribosomal subunit; part of the 5S rRNA/L5/L18/L25 subcomplex. Contacts the 5S rRNA and the P site tRNA. Forms a bridge to the 30S subunit in the 70S ribosome.

In terms of biological role, this is one of the proteins that bind and probably mediate the attachment of the 5S RNA into the large ribosomal subunit, where it forms part of the central protuberance. In the 70S ribosome it contacts protein S13 of the 30S subunit (bridge B1b), connecting the 2 subunits; this bridge is implicated in subunit movement. Contacts the P site tRNA; the 5S rRNA and some of its associated proteins might help stabilize positioning of ribosome-bound tRNAs. In Buchnera aphidicola subsp. Cinara cedri (strain Cc), this protein is Large ribosomal subunit protein uL5.